A 72-amino-acid polypeptide reads, in one-letter code: Probable neurotoxin pcD-993 (72 aa).

The signal sequence occupies residues 1–19 (MNYLVMISFALLLVIGVES). An LCN-type CS-alpha/beta domain is found at 21 to 72 (RDGYFVEPDNCVVHCMPSSEMCDRGCKHNGATSGSCKAFSKGGNACWCKGLR). Disulfide bonds link Cys-35/Cys-56, Cys-42/Cys-66, and Cys-46/Cys-68. A propeptide (removed by a carboxypeptidase) is located at residue Arg-72.

The protein belongs to the long (3 C-C) scorpion toxin superfamily. Expressed by the venom gland.

The protein localises to the secreted. The sequence is that of Probable neurotoxin pcD-993 from Androctonus australis (Sahara scorpion).